Consider the following 264-residue polypeptide: 4-hydroxy-tetrahydrodipicolinate reductase (264 aa).

Position 8–13 (8–13 (GPRGKM)) interacts with NAD(+). K36 provides a ligand contact to NADP(+). Residues 97-99 (GTT) and 123-126 (APNF) contribute to the NAD(+) site. The active-site Proton donor/acceptor is H153. Residue H154 participates in (S)-2,3,4,5-tetrahydrodipicolinate binding. The Proton donor role is filled by K157. 163–164 (GT) lines the (S)-2,3,4,5-tetrahydrodipicolinate pocket.

The protein belongs to the DapB family.

It is found in the cytoplasm. The enzyme catalyses (S)-2,3,4,5-tetrahydrodipicolinate + NAD(+) + H2O = (2S,4S)-4-hydroxy-2,3,4,5-tetrahydrodipicolinate + NADH + H(+). The catalysed reaction is (S)-2,3,4,5-tetrahydrodipicolinate + NADP(+) + H2O = (2S,4S)-4-hydroxy-2,3,4,5-tetrahydrodipicolinate + NADPH + H(+). Its pathway is amino-acid biosynthesis; L-lysine biosynthesis via DAP pathway; (S)-tetrahydrodipicolinate from L-aspartate: step 4/4. Functionally, catalyzes the conversion of 4-hydroxy-tetrahydrodipicolinate (HTPA) to tetrahydrodipicolinate. The polypeptide is 4-hydroxy-tetrahydrodipicolinate reductase (Halalkalibacterium halodurans (strain ATCC BAA-125 / DSM 18197 / FERM 7344 / JCM 9153 / C-125) (Bacillus halodurans)).